The following is a 284-amino-acid chain: uncharacterized protein (284 aa).

This sequence belongs to the IIV-6 436R family.

This is an uncharacterized protein from Invertebrate iridescent virus 3 (IIV-3).